Here is a 390-residue protein sequence, read N- to C-terminus: Acetate kinase (390 aa).

N10 is a Mg(2+) binding site. Position 17 (K17) interacts with ATP. Residue R89 coordinates substrate. The active-site Proton donor/acceptor is the D146. Residues 204–208 (HLGNG), 278–280 (DMR), and 323–327 (GIGEN) contribute to the ATP site. E376 serves as a coordination point for Mg(2+).

This sequence belongs to the acetokinase family. As to quaternary structure, homodimer. Mg(2+) serves as cofactor. Mn(2+) is required as a cofactor.

The protein resides in the cytoplasm. It carries out the reaction acetate + ATP = acetyl phosphate + ADP. Its pathway is metabolic intermediate biosynthesis; acetyl-CoA biosynthesis; acetyl-CoA from acetate: step 1/2. In terms of biological role, catalyzes the formation of acetyl phosphate from acetate and ATP. Can also catalyze the reverse reaction. This Mycoplasma pneumoniae (strain ATCC 29342 / M129 / Subtype 1) (Mycoplasmoides pneumoniae) protein is Acetate kinase.